The following is a 121-amino-acid chain: Regulator of ribonuclease activity B (121 aa).

The protein belongs to the RraB family. As to quaternary structure, interacts with the C-terminal region of Rne.

It is found in the cytoplasm. Its function is as follows. Globally modulates RNA abundance by binding to RNase E (Rne) and regulating its endonucleolytic activity. Can modulate Rne action in a substrate-dependent manner by altering the composition of the degradosome. The chain is Regulator of ribonuclease activity B from Psychromonas ingrahamii (strain DSM 17664 / CCUG 51855 / 37).